Reading from the N-terminus, the 298-residue chain is Ketohexokinase (298 aa).

Residues aspartate 15, glycine 41, asparagine 42, and asparagine 45 each contribute to the beta-D-fructose site. Residues arginine 108, 226-229, and 255-258 each bind ATP; these read AEEG and GAGD. Aspartate 258 lines the beta-D-fructose pocket.

This sequence belongs to the carbohydrate kinase PfkB family. As to quaternary structure, homodimer. Most abundant in liver, kidney, gut, spleen and pancreas. Low levels also found in adrenal, muscle, brain and eye.

It catalyses the reaction beta-D-fructose + ATP = beta-D-fructose 1-phosphate + ADP + H(+). The protein operates within carbohydrate metabolism; fructose metabolism. Its activity is regulated as follows. Requires potassium. Inhibition by ADP. Catalyzes the phosphorylation of the ketose sugar fructose to fructose-1-phosphate. This Homo sapiens (Human) protein is Ketohexokinase.